Reading from the N-terminus, the 182-residue chain is UPF0200 protein Mthe_1012 (182 aa).

8–15 provides a ligand contact to ATP; sequence GMPGSGKS.

It belongs to the UPF0200 family.

The polypeptide is UPF0200 protein Mthe_1012 (Methanothrix thermoacetophila (strain DSM 6194 / JCM 14653 / NBRC 101360 / PT) (Methanosaeta thermophila)).